Here is a 369-residue protein sequence, read N- to C-terminus: D-alanine--D-alanine ligase (369 aa).

In terms of domain architecture, ATP-grasp spans 152–359 (KKLFAAEGLP…YPSLLATMVE (208 aa)). ATP is bound at residue 180 to 235 (RERLGLPVFVKPARGGSSIGVSRVSSWDELDAAVAAARDHDPKVIVEAAIAGRELE). Residues Asp-314, Glu-326, and Asn-328 each contribute to the Mg(2+) site.

The protein belongs to the D-alanine--D-alanine ligase family. The cofactor is Mg(2+). It depends on Mn(2+) as a cofactor.

It localises to the cytoplasm. It catalyses the reaction 2 D-alanine + ATP = D-alanyl-D-alanine + ADP + phosphate + H(+). Its pathway is cell wall biogenesis; peptidoglycan biosynthesis. Functionally, cell wall formation. The sequence is that of D-alanine--D-alanine ligase from Mycobacterium avium (strain 104).